Here is a 224-residue protein sequence, read N- to C-terminus: 7-cyano-7-deazaguanine synthase (224 aa).

Residue Cys-8–Ala-18 participates in ATP binding. Zn(2+) is bound by residues Cys-190, Cys-198, Cys-201, and Cys-204.

Belongs to the QueC family. The cofactor is Zn(2+).

The enzyme catalyses 7-carboxy-7-deazaguanine + NH4(+) + ATP = 7-cyano-7-deazaguanine + ADP + phosphate + H2O + H(+). The protein operates within purine metabolism; 7-cyano-7-deazaguanine biosynthesis. Its function is as follows. Catalyzes the ATP-dependent conversion of 7-carboxy-7-deazaguanine (CDG) to 7-cyano-7-deazaguanine (preQ(0)). The protein is 7-cyano-7-deazaguanine synthase of Methanothrix thermoacetophila (strain DSM 6194 / JCM 14653 / NBRC 101360 / PT) (Methanosaeta thermophila).